The following is a 412-amino-acid chain: D-xylonate dehydratase (412 aa).

Homooctamer.

It carries out the reaction D-xylonate = 2-dehydro-3-deoxy-D-arabinonate + H2O. Functionally, NADP-dependent D-xylose dehydrogenase involved in the degradation of D-xylose, a major component of hemicelluloses such as xylan. Catalyzes the third reaction in the xylose utilization pathway through dehydratation of D-xylonate into 2-dehydro-3-deoxy-D-xylonate. This is D-xylonate dehydratase from Haloferax volcanii (strain ATCC 29605 / DSM 3757 / JCM 8879 / NBRC 14742 / NCIMB 2012 / VKM B-1768 / DS2) (Halobacterium volcanii).